A 303-amino-acid polypeptide reads, in one-letter code: Recombination-associated protein RdgC (303 aa).

The protein belongs to the RdgC family.

The protein resides in the cytoplasm. Its subcellular location is the nucleoid. May be involved in recombination. The protein is Recombination-associated protein RdgC of Serratia proteamaculans (strain 568).